Here is a 165-residue protein sequence, read N- to C-terminus: 3-isopropylmalate dehydratase small subunit (165 aa).

Belongs to the LeuD family. LeuD type 2 subfamily. As to quaternary structure, heterodimer of LeuC and LeuD.

The enzyme catalyses (2R,3S)-3-isopropylmalate = (2S)-2-isopropylmalate. It functions in the pathway amino-acid biosynthesis; L-leucine biosynthesis; L-leucine from 3-methyl-2-oxobutanoate: step 2/4. Catalyzes the isomerization between 2-isopropylmalate and 3-isopropylmalate, via the formation of 2-isopropylmaleate. In Helicobacter hepaticus (strain ATCC 51449 / 3B1), this protein is 3-isopropylmalate dehydratase small subunit.